Consider the following 114-residue polypeptide: Large ribosomal subunit protein bL21 (114 aa).

Belongs to the bacterial ribosomal protein bL21 family. Part of the 50S ribosomal subunit. Contacts protein L20.

In terms of biological role, this protein binds to 23S rRNA in the presence of protein L20. This Protochlamydia amoebophila (strain UWE25) protein is Large ribosomal subunit protein bL21.